The primary structure comprises 545 residues: CTP synthase (545 aa).

The segment at 2 to 266 is amidoligase domain; that stretch reads TTNYIFVTGG…DDYICKRFSL (265 aa). Residue S14 coordinates CTP. Residue S14 coordinates UTP. ATP-binding positions include 15–20 and D72; that span reads SLGKGI. Mg(2+) is bound by residues D72 and E140. CTP is bound by residues 147–149, 187–192, and K223; these read DIE and KTKPTQ. Residues 187–192 and K223 contribute to the UTP site; that span reads KTKPTQ. An ATP-binding site is contributed by 239–241; it reads KDV. Residues 291 to 542 form the Glutamine amidotransferase type-1 domain; that stretch reads TIGMVGKYIE…VKAANEHQKR (252 aa). Residue G352 participates in L-glutamine binding. The active-site Nucleophile; for glutamine hydrolysis is C379. L-glutamine contacts are provided by residues 380–383, E403, and R470; that span reads LGMQ. Active-site residues include H515 and E517.

Belongs to the CTP synthase family. In terms of assembly, homotetramer.

The catalysed reaction is UTP + L-glutamine + ATP + H2O = CTP + L-glutamate + ADP + phosphate + 2 H(+). The enzyme catalyses L-glutamine + H2O = L-glutamate + NH4(+). It carries out the reaction UTP + NH4(+) + ATP = CTP + ADP + phosphate + 2 H(+). It participates in pyrimidine metabolism; CTP biosynthesis via de novo pathway; CTP from UDP: step 2/2. Allosterically activated by GTP, when glutamine is the substrate; GTP has no effect on the reaction when ammonia is the substrate. The allosteric effector GTP functions by stabilizing the protein conformation that binds the tetrahedral intermediate(s) formed during glutamine hydrolysis. Inhibited by the product CTP, via allosteric rather than competitive inhibition. Catalyzes the ATP-dependent amination of UTP to CTP with either L-glutamine or ammonia as the source of nitrogen. Regulates intracellular CTP levels through interactions with the four ribonucleotide triphosphates. In Salmonella typhi, this protein is CTP synthase.